The sequence spans 501 residues: Aldehyde dehydrogenase 1A1 (501 aa).

Ser-2 is modified (N-acetylserine). 2 positions are modified to N6-acetyllysine: Lys-91 and Lys-128. NAD(+) is bound by residues 167–170, 193–196, 226–227, and 246–247; these read IPWN, KPAE, GP, and GS. Lys-252 carries the post-translational modification N6-acetyllysine. Glu-269 functions as the Proton acceptor in the catalytic mechanism. An NAD(+)-binding site is contributed by 269–271; it reads ELG. Catalysis depends on Cys-303, which acts as the Nucleophile. The interval 336–501 is mediates interaction with PRMT3; it reads LTPGVSQGPQ…VTIKISQKNS (166 aa). Position 337 is a phosphothreonine (Thr-337). 349 to 353 lines the NAD(+) pocket; sequence EQYEK. 2 positions are modified to N6-acetyllysine: Lys-353 and Lys-367. Residue 400–402 coordinates NAD(+); the sequence is EIF. Lys-410 is modified (N6-acetyllysine). Residue Ser-413 is modified to Phosphoserine. N6-acetyllysine is present on residues Lys-419 and Lys-495.

The protein belongs to the aldehyde dehydrogenase family. In terms of assembly, homotetramer. Interacts with PRMT3; the interaction is direct, inhibits ALDH1A1 aldehyde dehydrogenase activity and is independent of the methyltransferase activity of PRMT3. In terms of processing, the N-terminus is blocked most probably by acetylation. Expressed in muscle, liver, small intestine, kidney, brain, lung, heart but not detected in erythrocytes (at protein level).

It is found in the cytoplasm. It localises to the cytosol. Its subcellular location is the cell projection. The protein resides in the axon. The catalysed reaction is an aldehyde + NAD(+) + H2O = a carboxylate + NADH + 2 H(+). It catalyses the reaction all-trans-retinal + NAD(+) + H2O = all-trans-retinoate + NADH + 2 H(+). The enzyme catalyses 9-cis-retinal + NAD(+) + H2O = 9-cis-retinoate + NADH + 2 H(+). It carries out the reaction 11-cis-retinal + NAD(+) + H2O = 11-cis-retinoate + NADH + 2 H(+). The catalysed reaction is 13-cis-retinal + NAD(+) + H2O = 13-cis-retinoate + NADH + 2 H(+). It catalyses the reaction 3-deoxyglucosone + NAD(+) + H2O = 2-dehydro-3-deoxy-D-gluconate + NADH + 2 H(+). The enzyme catalyses (E)-4-hydroxynon-2-enal + NAD(+) + H2O = (E)-4-hydroxynon-2-enoate + NADH + 2 H(+). It carries out the reaction malonaldehyde + NAD(+) + H2O = 3-oxopropanoate + NADH + 2 H(+). The catalysed reaction is hexanal + NAD(+) + H2O = hexanoate + NADH + 2 H(+). It catalyses the reaction propanal + NAD(+) + H2O = propanoate + NADH + 2 H(+). The enzyme catalyses acetaldehyde + NAD(+) + H2O = acetate + NADH + 2 H(+). It carries out the reaction benzaldehyde + NAD(+) + H2O = benzoate + NADH + 2 H(+). The catalysed reaction is 4-aminobutanal + NAD(+) + H2O = 4-aminobutanoate + NADH + 2 H(+). Its pathway is cofactor metabolism; retinol metabolism. Its function is as follows. Cytosolic dehydrogenase that catalyzes the irreversible oxidation of a wide range of aldehydes to their corresponding carboxylic acid. Functions downstream of retinol dehydrogenases and catalyzes the oxidation of retinaldehyde into retinoic acid, the second step in the oxidation of retinol/vitamin A into retinoic acid. This pathway is crucial to control the levels of retinol and retinoic acid, two important molecules which excess can be teratogenic and cytotoxic. Also oxidizes aldehydes resulting from lipid peroxidation like (E)-4-hydroxynon-2-enal/HNE, malonaldehyde and hexanal that form protein adducts and are highly cytotoxic. By participating for instance to the clearance of (E)-4-hydroxynon-2-enal/HNE in the lens epithelium prevents the formation of HNE-protein adducts and lens opacification. Also functions downstream of fructosamine-3-kinase in the fructosamine degradation pathway by catalyzing the oxidation of 3-deoxyglucosone, the carbohydrate product of fructosamine 3-phosphate decomposition, which is itself a potent glycating agent that may react with lysine and arginine side-chains of proteins. Also has an aminobutyraldehyde dehydrogenase activity and is probably part of an alternative pathway for the biosynthesis of GABA/4-aminobutanoate in midbrain, thereby playing a role in GABAergic synaptic transmission. This is Aldehyde dehydrogenase 1A1 from Bos taurus (Bovine).